Consider the following 724-residue polypeptide: Degenerin mec-10 (724 aa).

Positions 1–15 (MNRNPRMSKFQPNPR) are enriched in polar residues. Positions 1–22 (MNRNPRMSKFQPNPRSRSRFQD) are disordered. Over 1–122 (MNRNPRMSKF…GQAPNSLYRA (122 aa)) the chain is Cytoplasmic. The helical transmembrane segment at 123–143 (AWVFLLLICAIQFINQAVAVI) threads the bilayer. Residues 144–684 (QKYQKMDKIT…FGGHLGLWSG (541 aa)) lie on the Extracellular side of the membrane. The disordered stretch occupies residues 229–265 (KRGAGEKGTFEPANSACECDEEDGSNECEERSTEKPS). Over residues 246–255 (ECDEEDGSNE) the composition is skewed to acidic residues. The span at 256 to 265 (CEERSTEKPS) shows a compositional bias: basic and acidic residues. Residues asparagine 293, asparagine 369, asparagine 463, asparagine 605, and asparagine 624 are each glycosylated (N-linked (GlcNAc...) asparagine). The helical transmembrane segment at 685–705 (VSVMTCCEFVCLAFELIYMAI) threads the bilayer. Residues 706–724 (AHHINQQRIRRRENAANEY) lie on the Cytoplasmic side of the membrane.

Belongs to the amiloride-sensitive sodium channel (TC 1.A.6) family. As to quaternary structure, component of a non-voltage-gated amiloride-sensitive cation channel complex (also called the degenerin channel complex) composed of at least the mec-2, mec-4, mec-6 and mec-10 subunits; the complex mediates mechanotransduction in touch cells. Interacts with mec-4 and mec-6.

It is found in the cell membrane. Functionally, subunit of an amiloride-sensitive cation channel (degenerin channel complex) permeable for sodium, potassium, lithium and N-methylglucamine, and required for mechanosensory transduction (touch sensitivity). Negatively regulates the turning step of male mating behavior. In Caenorhabditis elegans, this protein is Degenerin mec-10.